Consider the following 362-residue polypeptide: Biotin synthase (362 aa).

Residues 46 to 273 (NEVQVSTLLS…ASHVRLSAGR (228 aa)) form the Radical SAM core domain. [4Fe-4S] cluster is bound by residues Cys-61, Cys-65, and Cys-68. Cys-105, Cys-136, Cys-196, and Arg-268 together coordinate [2Fe-2S] cluster. The segment at 320 to 339 (PAQRAQKPDQVQEEELLAEV) is disordered.

Belongs to the radical SAM superfamily. Biotin synthase family. Homodimer. [4Fe-4S] cluster serves as cofactor. Requires [2Fe-2S] cluster as cofactor.

The enzyme catalyses (4R,5S)-dethiobiotin + (sulfur carrier)-SH + 2 reduced [2Fe-2S]-[ferredoxin] + 2 S-adenosyl-L-methionine = (sulfur carrier)-H + biotin + 2 5'-deoxyadenosine + 2 L-methionine + 2 oxidized [2Fe-2S]-[ferredoxin]. The protein operates within cofactor biosynthesis; biotin biosynthesis; biotin from 7,8-diaminononanoate: step 2/2. Catalyzes the conversion of dethiobiotin (DTB) to biotin by the insertion of a sulfur atom into dethiobiotin via a radical-based mechanism. This chain is Biotin synthase, found in Aeromonas hydrophila subsp. hydrophila (strain ATCC 7966 / DSM 30187 / BCRC 13018 / CCUG 14551 / JCM 1027 / KCTC 2358 / NCIMB 9240 / NCTC 8049).